Consider the following 56-residue polypeptide: Ribosome modulation factor (56 aa).

Belongs to the ribosome modulation factor family.

It localises to the cytoplasm. In terms of biological role, during stationary phase, converts 70S ribosomes to an inactive dimeric form (100S ribosomes). This is Ribosome modulation factor from Serratia proteamaculans (strain 568).